We begin with the raw amino-acid sequence, 326 residues long: 3-oxopimeloyl-[acyl-carrier-protein] synthase (326 aa).

Residues C115 and H253 contribute to the active site. The tract at residues 254–258 (QANIR) is ACP-binding. N283 is a catalytic residue.

The protein belongs to the thiolase-like superfamily. BioZ family.

The catalysed reaction is malonyl-[ACP] + an acyl-CoA + H(+) = a 3-oxoacyl-[ACP] + CO2 + CoA. The enzyme catalyses glutaryl-CoA + malonyl-[ACP] + H(+) = 3-oxo-6-carboxyhexanoyl-[ACP] + CO2 + CoA. It participates in cofactor biosynthesis; biotin biosynthesis. Its function is as follows. Involved in the formation of the biotin precursor pimeloyl-ACP. Catalyzes the condensation of glutaryl-CoA, an intermediate in lysine degradation, with malonyl-ACP to produce 3-oxopimeloyl-ACP. This Brucella abortus (strain 2308) protein is 3-oxopimeloyl-[acyl-carrier-protein] synthase.